Reading from the N-terminus, the 66-residue chain is Cold shock-like protein (66 aa).

Positions 3 to 62 constitute a CSD domain; the sequence is GKVKWFDSKKGYGFITKDEGGDVFVHWSAIEMEGFKTLKEGQVVEFEIQEGKKGPQAAHV.

Monomer.

It is found in the cytoplasm. The protein is Cold shock-like protein (csp) of Thermotoga maritima (strain ATCC 43589 / DSM 3109 / JCM 10099 / NBRC 100826 / MSB8).